A 300-amino-acid chain; its full sequence is Geranylgeranyl pyrophosphate synthase (300 aa).

At Met-1 the chain carries N-acetylmethionine. Isopentenyl diphosphate-binding residues include Lys-25, Arg-28, and His-57. Asp-64 and Asp-68 together coordinate Mg(2+). Arg-73 contributes to the dimethylallyl diphosphate binding site. Arg-74 contributes to the isopentenyl diphosphate binding site. The dimethylallyl diphosphate site is built by Lys-151, Thr-152, Gln-185, Lys-202, and Lys-212.

Belongs to the FPP/GGPP synthase family. Homohexamer; trimer of homodimers. Mg(2+) serves as cofactor. Abundantly expressed in testis. Found in other tissues to a lower extent. Expressed in dermal fibroblast and skeletal muscle.

It is found in the cytoplasm. It localises to the perinuclear region. Its subcellular location is the myofibril. The protein localises to the sarcomere. The protein resides in the z line. The catalysed reaction is isopentenyl diphosphate + dimethylallyl diphosphate = (2E)-geranyl diphosphate + diphosphate. It carries out the reaction isopentenyl diphosphate + (2E)-geranyl diphosphate = (2E,6E)-farnesyl diphosphate + diphosphate. It catalyses the reaction isopentenyl diphosphate + (2E,6E)-farnesyl diphosphate = (2E,6E,10E)-geranylgeranyl diphosphate + diphosphate. It functions in the pathway isoprenoid biosynthesis; farnesyl diphosphate biosynthesis; farnesyl diphosphate from geranyl diphosphate and isopentenyl diphosphate: step 1/1. The protein operates within isoprenoid biosynthesis; geranyl diphosphate biosynthesis; geranyl diphosphate from dimethylallyl diphosphate and isopentenyl diphosphate: step 1/1. Its pathway is isoprenoid biosynthesis; geranylgeranyl diphosphate biosynthesis; geranylgeranyl diphosphate from farnesyl diphosphate and isopentenyl diphosphate: step 1/1. Its activity is regulated as follows. Subject to product inhibition by geranylgeranyl diphosphate. Functionally, catalyzes the trans-addition of the three molecules of IPP onto DMAPP to form geranylgeranyl pyrophosphate, an important precursor of carotenoids and geranylated proteins. The protein is Geranylgeranyl pyrophosphate synthase (GGPS1) of Homo sapiens (Human).